The primary structure comprises 35 residues: Photosystem II reaction center protein T (35 aa).

Residues 3–23 (ALVYTFLLVSTLGIIFFAIFF) traverse the membrane as a helical segment.

This sequence belongs to the PsbT family. PSII is composed of 1 copy each of membrane proteins PsbA, PsbB, PsbC, PsbD, PsbE, PsbF, PsbH, PsbI, PsbJ, PsbK, PsbL, PsbM, PsbT, PsbY, PsbZ, Psb30/Ycf12, at least 3 peripheral proteins of the oxygen-evolving complex and a large number of cofactors. It forms dimeric complexes.

The protein localises to the plastid. The protein resides in the chloroplast thylakoid membrane. Its function is as follows. Found at the monomer-monomer interface of the photosystem II (PS II) dimer, plays a role in assembly and dimerization of PSII. PSII is a light-driven water plastoquinone oxidoreductase, using light energy to abstract electrons from H(2)O, generating a proton gradient subsequently used for ATP formation. This is Photosystem II reaction center protein T from Ceratophyllum demersum (Rigid hornwort).